The primary structure comprises 819 residues: Outer membrane usher protein CssD (819 aa).

This sequence belongs to the fimbrial export usher family.

Its subcellular location is the cell outer membrane. Its function is as follows. Involved in the export and assembly of C6 fimbrial subunits across the outer membrane. The chain is Outer membrane usher protein CssD (cssD) from Escherichia coli.